The following is a 486-amino-acid chain: MHKQGKYQFWFITGSQPLYGQEALDEVAAHSKAMVERLKEKLPEELVLKPVASSPERILELFRAANGDNNCAGIITWMHTFSPAKMWIAGLNELNKPMLHFHTQYNRDIPWGDIDMDFMNLNQSAHGDREFGFMVSRMNIDRKVVAGHWQDARVMKRIGDWMKTVNAYQESKQLKIARFGDNMREVAVTEGDKVEAQIKLGWSVSGFGIGDLVEVINSVSTEEVNALMDEYRSLYTFHRDANIAAVEEQARIEIGIERFLQQGDFRAFSTTFEDLHGMKQLPGLAVQRLMAKGYGFAGEGDWKTAALLRVLKVLAGNVGTSFMEDYTNHLEPGQEMILGSHMLEVCPTISAQKPEIVVAPLSMGNREDPARLVFKGKAGRALNAALIDMGSRFRLVANEVEAVENPHDMPKLPVASVLWKPLPSFSEATEAWIYAGGAHHTVFSYEISKEQLADWASLMGIECIVIDDQSNVGQVRKELFWNRRAY.

Mn(2+) is bound by residues glutamate 299, glutamate 324, histidine 341, and histidine 440.

This sequence belongs to the arabinose isomerase family. The cofactor is Mn(2+).

The catalysed reaction is beta-L-arabinopyranose = L-ribulose. The protein operates within carbohydrate degradation; L-arabinose degradation via L-ribulose; D-xylulose 5-phosphate from L-arabinose (bacterial route): step 1/3. Functionally, catalyzes the conversion of L-arabinose to L-ribulose. This is L-arabinose isomerase from Shouchella clausii (strain KSM-K16) (Alkalihalobacillus clausii).